The sequence spans 332 residues: Holliday junction branch migration complex subunit RuvB (332 aa).

Positions 1-181 (MSRILDNEQM…FGITGHMEYY (181 aa)) are large ATPase domain (RuvB-L). Residues leucine 20, arginine 21, glycine 62, lysine 65, threonine 66, threonine 67, 128–130 (EDF), arginine 171, tyrosine 181, and arginine 218 contribute to the ATP site. Residue threonine 66 participates in Mg(2+) binding. Residues 182–252 (EEADLTEIVE…ITDQALSMLD (71 aa)) form a small ATPAse domain (RuvB-S) region. Residues 255-332 (HEGLDYVDQK…EHLGYEYMEK (78 aa)) form a head domain (RuvB-H) region. Residues arginine 291, arginine 310, arginine 312, and arginine 315 each contribute to the DNA site.

Belongs to the RuvB family. Homohexamer. Forms an RuvA(8)-RuvB(12)-Holliday junction (HJ) complex. HJ DNA is sandwiched between 2 RuvA tetramers; dsDNA enters through RuvA and exits via RuvB. An RuvB hexamer assembles on each DNA strand where it exits the tetramer. Each RuvB hexamer is contacted by two RuvA subunits (via domain III) on 2 adjacent RuvB subunits; this complex drives branch migration. In the full resolvosome a probable DNA-RuvA(4)-RuvB(12)-RuvC(2) complex forms which resolves the HJ.

It is found in the cytoplasm. It carries out the reaction ATP + H2O = ADP + phosphate + H(+). Functionally, the RuvA-RuvB-RuvC complex processes Holliday junction (HJ) DNA during genetic recombination and DNA repair, while the RuvA-RuvB complex plays an important role in the rescue of blocked DNA replication forks via replication fork reversal (RFR). RuvA specifically binds to HJ cruciform DNA, conferring on it an open structure. The RuvB hexamer acts as an ATP-dependent pump, pulling dsDNA into and through the RuvAB complex. RuvB forms 2 homohexamers on either side of HJ DNA bound by 1 or 2 RuvA tetramers; 4 subunits per hexamer contact DNA at a time. Coordinated motions by a converter formed by DNA-disengaged RuvB subunits stimulates ATP hydrolysis and nucleotide exchange. Immobilization of the converter enables RuvB to convert the ATP-contained energy into a lever motion, pulling 2 nucleotides of DNA out of the RuvA tetramer per ATP hydrolyzed, thus driving DNA branch migration. The RuvB motors rotate together with the DNA substrate, which together with the progressing nucleotide cycle form the mechanistic basis for DNA recombination by continuous HJ branch migration. Branch migration allows RuvC to scan DNA until it finds its consensus sequence, where it cleaves and resolves cruciform DNA. This chain is Holliday junction branch migration complex subunit RuvB, found in Streptococcus gordonii (strain Challis / ATCC 35105 / BCRC 15272 / CH1 / DL1 / V288).